The following is a 377-amino-acid chain: Succinyl-diaminopimelate desuccinylase (377 aa).

Position 68 (His68) interacts with Zn(2+). Residue Asp70 is part of the active site. Residue Asp101 coordinates Zn(2+). The active-site Proton acceptor is Glu135. Residues Glu136, Glu164, and His350 each coordinate Zn(2+).

Belongs to the peptidase M20A family. DapE subfamily. As to quaternary structure, homodimer. Requires Zn(2+) as cofactor. Co(2+) is required as a cofactor.

It catalyses the reaction N-succinyl-(2S,6S)-2,6-diaminopimelate + H2O = (2S,6S)-2,6-diaminopimelate + succinate. Its pathway is amino-acid biosynthesis; L-lysine biosynthesis via DAP pathway; LL-2,6-diaminopimelate from (S)-tetrahydrodipicolinate (succinylase route): step 3/3. Catalyzes the hydrolysis of N-succinyl-L,L-diaminopimelic acid (SDAP), forming succinate and LL-2,6-diaminopimelate (DAP), an intermediate involved in the bacterial biosynthesis of lysine and meso-diaminopimelic acid, an essential component of bacterial cell walls. The chain is Succinyl-diaminopimelate desuccinylase from Acinetobacter baumannii (strain SDF).